The chain runs to 96 residues: MEQAPEDQGPQREPYNEWTLELLEELKSEAVRHFPRIWLHNLGQHIYETYGDTWAGVEAIIRILQQLLFIHFRIGCRHSRIGVTRQRRARNGASRS.

The segment at 1–42 (MEQAPEDQGPQREPYNEWTLELLEELKSEAVRHFPRIWLHNL) is homooligomerization. S79, S94, and S96 each carry phosphoserine; by host.

Belongs to the HIV-1 VPR protein family. In terms of assembly, homooligomer, may form homodimer. Interacts with p6-gag region of the Pr55 Gag precursor protein through a (Leu-X-X)4 motif near the C-terminus of the P6gag protein. Interacts with host UNG. May interact with host RAD23A/HHR23A. Interacts with host VPRBP/DCAF1, leading to hijack the CUL4A-RBX1-DDB1-DCAF1/VPRBP complex, mediating ubiquitination of host proteins such as TERT and ZGPAT and arrest of the cell cycle in G2 phase. In terms of processing, phosphorylated on several residues by host. These phosphorylations regulate VPR activity for the nuclear import of the HIV-1 pre-integration complex.

Its subcellular location is the virion. It localises to the host nucleus. It is found in the host extracellular space. During virus replication, may deplete host UNG protein, and incude G2-M cell cycle arrest. Acts by targeting specific host proteins for degradation by the 26S proteasome, through association with the cellular CUL4A-DDB1 E3 ligase complex by direct interaction with host VPRPB/DCAF-1. Cell cycle arrest reportedly occurs within hours of infection and is not blocked by antiviral agents, suggesting that it is initiated by the VPR carried into the virion. Additionally, VPR induces apoptosis in a cell cycle dependent manner suggesting that these two effects are mechanistically linked. Detected in the serum and cerebrospinal fluid of AIDS patient, VPR may also induce cell death to bystander cells. In terms of biological role, during virus entry, plays a role in the transport of the viral pre-integration (PIC) complex to the host nucleus. This function is crucial for viral infection of non-dividing macrophages. May act directly at the nuclear pore complex, by binding nucleoporins phenylalanine-glycine (FG)-repeat regions. The polypeptide is Protein Vpr (Homo sapiens (Human)).